Consider the following 95-residue polypeptide: Protein TusB (95 aa).

Belongs to the DsrH/TusB family. In terms of assembly, heterohexamer, formed by a dimer of trimers. The hexameric TusBCD complex contains 2 copies each of TusB, TusC and TusD. The TusBCD complex interacts with TusE.

Its subcellular location is the cytoplasm. Part of a sulfur-relay system required for 2-thiolation of 5-methylaminomethyl-2-thiouridine (mnm(5)s(2)U) at tRNA wobble positions. The sequence is that of Protein TusB from Escherichia coli (strain SMS-3-5 / SECEC).